Here is a 322-residue protein sequence, read N- to C-terminus: Extracellular metalloprotease AFUA_1G07730 (322 aa).

Positions 1-22 (MLPFNSCVYVLLIISLMSNCRA) are cleaved as a signal peptide. N-linked (GlcNAc...) asparagine glycans are attached at residues N123 and N197. H233 is a Zn(2+) binding site. E234 is an active-site residue. A Zn(2+)-binding site is contributed by H237. An intrachain disulfide couples C272 to C299.

It belongs to the peptidase M43B family.

Its subcellular location is the secreted. Its function is as follows. Secreted metalloproteinase that allows assimilation of proteinaceous substrates. Plays a pivotal role as a pathogenicity determinant during infections and contributes to the ability of the pathogen to persist within the mammalian host. In Aspergillus fumigatus (strain ATCC MYA-4609 / CBS 101355 / FGSC A1100 / Af293) (Neosartorya fumigata), this protein is Extracellular metalloprotease AFUA_1G07730.